The following is a 450-amino-acid chain: Glutamate-1-semialdehyde 2,1-aminomutase (450 aa).

Lys-262 carries the post-translational modification N6-(pyridoxal phosphate)lysine.

This sequence belongs to the class-III pyridoxal-phosphate-dependent aminotransferase family. HemL subfamily. In terms of assembly, homodimer. Pyridoxal 5'-phosphate is required as a cofactor.

Its subcellular location is the cytoplasm. The catalysed reaction is (S)-4-amino-5-oxopentanoate = 5-aminolevulinate. Its pathway is porphyrin-containing compound metabolism; protoporphyrin-IX biosynthesis; 5-aminolevulinate from L-glutamyl-tRNA(Glu): step 2/2. In Campylobacter hominis (strain ATCC BAA-381 / DSM 21671 / CCUG 45161 / LMG 19568 / NCTC 13146 / CH001A), this protein is Glutamate-1-semialdehyde 2,1-aminomutase.